Consider the following 1272-residue polypeptide: AF4/FMR2 family member 2 (1272 aa).

Disordered stretches follow at residues 151 to 190 (SNRKSKSEWPRDSHNTSPAQASQTSSQPNKMQTSTQDPPQ), 204 to 231 (PQIGTVEKSNPSSKEENNPNSGGEDTFK), 372 to 401 (TLQKWSDPSSRASTKMLEDDLKLSSDEDDL), 422 to 497 (KAKP…QLDK), 557 to 694 (IREK…ETLQ), 715 to 743 (TLSTLTNGNSNNLSTSNEETAFSPPPAMQ), and 772 to 899 (PGQN…QDKN). Basic and acidic residues predominate over residues 155-164 (SKSEWPRDSH). The span at 165–179 (NTSPAQASQTSSQPN) shows a compositional bias: low complexity. A compositionally biased stretch (polar residues) spans 180 to 189 (KMQTSTQDPP). Over residues 210–227 (EKSNPSSKEENNPNSGGE) the composition is skewed to low complexity. Residues 374-384 (QKWSDPSSRAS) show a composition bias toward polar residues. The span at 387–396 (MLEDDLKLSS) shows a compositional bias: basic and acidic residues. Residue S395 is modified to Phosphoserine. Positions 436–450 (TPQSTPATQTNVGSG) are enriched in polar residues. T482 is modified (phosphothreonine). The span at 580–590 (STSVDTVSQRT) shows a compositional bias: polar residues. Positions 620 to 633 (PKEKGSVELPDPPR) are enriched in basic and acidic residues. The segment covering 634 to 644 (SRNKATAHKPV) has biased composition (basic residues). Residues 715–734 (TLSTLTNGNSNNLSTSNEET) show a composition bias toward low complexity. The segment covering 815–831 (PAETAEKIPEKKQRLED) has biased composition (basic and acidic residues). Positions 841 to 850 (CISPAPPHKP) are enriched in pro residues. The span at 887 to 899 (VSGNNGHFGQDKN) shows a compositional bias: polar residues.

It belongs to the AF4 family. As to expression, highly expressed in the hippocampus, the piriform cortex, Purkinje cells and the cingulate gyrus.

Its subcellular location is the nucleus speckle. RNA-binding protein. Might be involved in alternative splicing regulation through an interaction with G-quartet RNA structure. The chain is AF4/FMR2 family member 2 from Mus musculus (Mouse).